We begin with the raw amino-acid sequence, 274 residues long: tRNA pseudouridine synthase A (274 aa).

Aspartate 56 functions as the Nucleophile in the catalytic mechanism. A substrate-binding site is contributed by tyrosine 109.

It belongs to the tRNA pseudouridine synthase TruA family.

The enzyme catalyses uridine(38/39/40) in tRNA = pseudouridine(38/39/40) in tRNA. In terms of biological role, formation of pseudouridine at positions 38, 39 and 40 in the anticodon stem and loop of transfer RNAs. The chain is tRNA pseudouridine synthase A from Methanosphaera stadtmanae (strain ATCC 43021 / DSM 3091 / JCM 11832 / MCB-3).